The primary structure comprises 183 residues: ATP synthase subunit delta (183 aa).

The protein belongs to the ATPase delta chain family. F-type ATPases have 2 components, F(1) - the catalytic core - and F(0) - the membrane proton channel. F(1) has five subunits: alpha(3), beta(3), gamma(1), delta(1), epsilon(1). F(0) has three main subunits: a(1), b(2) and c(10-14). The alpha and beta chains form an alternating ring which encloses part of the gamma chain. F(1) is attached to F(0) by a central stalk formed by the gamma and epsilon chains, while a peripheral stalk is formed by the delta and b chains.

The protein resides in the cell inner membrane. F(1)F(0) ATP synthase produces ATP from ADP in the presence of a proton or sodium gradient. F-type ATPases consist of two structural domains, F(1) containing the extramembraneous catalytic core and F(0) containing the membrane proton channel, linked together by a central stalk and a peripheral stalk. During catalysis, ATP synthesis in the catalytic domain of F(1) is coupled via a rotary mechanism of the central stalk subunits to proton translocation. Functionally, this protein is part of the stalk that links CF(0) to CF(1). It either transmits conformational changes from CF(0) to CF(1) or is implicated in proton conduction. This chain is ATP synthase subunit delta, found in Desulfosudis oleivorans (strain DSM 6200 / JCM 39069 / Hxd3) (Desulfococcus oleovorans).